Reading from the N-terminus, the 215-residue chain is Probable phosphoglycerate mutase GpmB (215 aa).

Residues 8 to 15, 21 to 22, Arg-58, Lys-60, 82 to 85, 104 to 105, and 151 to 152 contribute to the substrate site; these read RHGETQWN, QG, ELDM, RR, and GI. His-9 functions as the Tele-phosphohistidine intermediate in the catalytic mechanism. Catalysis depends on Glu-82, which acts as the Proton donor/acceptor.

This sequence belongs to the phosphoglycerate mutase family. GpmB subfamily.

The catalysed reaction is (2R)-2-phosphoglycerate = (2R)-3-phosphoglycerate. It participates in carbohydrate degradation; glycolysis; pyruvate from D-glyceraldehyde 3-phosphate: step 3/5. The polypeptide is Probable phosphoglycerate mutase GpmB (Salmonella paratyphi C (strain RKS4594)).